Consider the following 201-residue polypeptide: Dephospho-CoA kinase (201 aa).

Residues 2–201 (MIGLTGGIAS…KRWKVIPEDQ (200 aa)) enclose the DPCK domain. An ATP-binding site is contributed by 10 to 15 (ASGKSS).

The protein belongs to the CoaE family.

It localises to the cytoplasm. It carries out the reaction 3'-dephospho-CoA + ATP = ADP + CoA + H(+). The protein operates within cofactor biosynthesis; coenzyme A biosynthesis; CoA from (R)-pantothenate: step 5/5. Functionally, catalyzes the phosphorylation of the 3'-hydroxyl group of dephosphocoenzyme A to form coenzyme A. The sequence is that of Dephospho-CoA kinase from Halalkalibacterium halodurans (strain ATCC BAA-125 / DSM 18197 / FERM 7344 / JCM 9153 / C-125) (Bacillus halodurans).